The following is a 520-amino-acid chain: NAD(P)H-quinone oxidoreductase subunit 2 (520 aa).

14 helical membrane passes run 26 to 46, 54 to 74, 91 to 111, 120 to 140, 144 to 164, 179 to 199, 220 to 240, 252 to 272, 288 to 308, 314 to 334, 342 to 362, 386 to 406, 421 to 441, and 474 to 494; these read AVLP…VDLA, WSPP…AMQW, LAIA…LISW, PIGE…LLCG, LVSV…LSGY, LLVG…LYGI, SALA…AVPF, PTPV…ALAI, LLFT…ALAQ, MLAY…VCGT, VLYM…IILF, LGLS…GFFG, LLVT…ISVI, and VALI…NPLF.

It belongs to the complex I subunit 2 family. In terms of assembly, NDH-1 can be composed of about 15 different subunits; different subcomplexes with different compositions have been identified which probably have different functions.

It is found in the cellular thylakoid membrane. The enzyme catalyses a plastoquinone + NADH + (n+1) H(+)(in) = a plastoquinol + NAD(+) + n H(+)(out). The catalysed reaction is a plastoquinone + NADPH + (n+1) H(+)(in) = a plastoquinol + NADP(+) + n H(+)(out). Its function is as follows. NDH-1 shuttles electrons from an unknown electron donor, via FMN and iron-sulfur (Fe-S) centers, to quinones in the respiratory and/or the photosynthetic chain. The immediate electron acceptor for the enzyme in this species is believed to be plastoquinone. Couples the redox reaction to proton translocation, and thus conserves the redox energy in a proton gradient. Cyanobacterial NDH-1 also plays a role in inorganic carbon-concentration. This is NAD(P)H-quinone oxidoreductase subunit 2 from Prochlorococcus marinus (strain NATL2A).